Here is a 799-residue protein sequence, read N- to C-terminus: Elongation factor G, mitochondrial (799 aa).

A mitochondrion-targeting transit peptide spans 1–24; the sequence is MRCPSLARLPHRAVSGLTRTPVRF. The 288-residue stretch at 97–384 folds into the tr-type G domain; that stretch reads SRVRNIGIAA…GVIDYLPNPS (288 aa). GTP is bound by residues 106–113, 182–186, and 236–239; these read AHIDSGKT, DTPGH, and NKMD.

The protein belongs to the TRAFAC class translation factor GTPase superfamily. Classic translation factor GTPase family. EF-G/EF-2 subfamily.

Its subcellular location is the mitochondrion. The protein operates within protein biosynthesis; polypeptide chain elongation. Functionally, mitochondrial GTPase that catalyzes the GTP-dependent ribosomal translocation step during translation elongation. During this step, the ribosome changes from the pre-translocational (PRE) to the post-translocational (POST) state as the newly formed A-site-bound peptidyl-tRNA and P-site-bound deacylated tRNA move to the P and E sites, respectively. Catalyzes the coordinated movement of the two tRNA molecules, the mRNA and conformational changes in the ribosome. The sequence is that of Elongation factor G, mitochondrial (mef1) from Emericella nidulans (strain FGSC A4 / ATCC 38163 / CBS 112.46 / NRRL 194 / M139) (Aspergillus nidulans).